A 118-amino-acid chain; its full sequence is Large ribosomal subunit protein uL18 (118 aa).

Residues 1-24 (MISKPDKNKIRQKRHRRVRGKLSG) form a disordered region. Over residues 10-20 (IRQKRHRRVRG) the composition is skewed to basic residues.

It belongs to the universal ribosomal protein uL18 family. As to quaternary structure, part of the 50S ribosomal subunit; part of the 5S rRNA/L5/L18/L25 subcomplex. Contacts the 5S and 23S rRNAs.

Functionally, this is one of the proteins that bind and probably mediate the attachment of the 5S RNA into the large ribosomal subunit, where it forms part of the central protuberance. This is Large ribosomal subunit protein uL18 from Streptococcus agalactiae serotype III (strain NEM316).